We begin with the raw amino-acid sequence, 109 residues long: U-scoloptoxin(16)-Ssd1a (109 aa).

The first 23 residues, 1–23 (MTTSATVIIMVLCVGSLVIFSEG), serve as a signal peptide directing secretion.

Post-translationally, contains 4 disulfide bonds. As to expression, expressed by the venom gland.

It is found in the secreted. This is U-scoloptoxin(16)-Ssd1a from Scolopendra dehaani (Thai centipede).